A 172-amino-acid polypeptide reads, in one-letter code: Adenine phosphoribosyltransferase (172 aa).

This sequence belongs to the purine/pyrimidine phosphoribosyltransferase family. As to quaternary structure, homodimer.

The protein resides in the cytoplasm. It carries out the reaction AMP + diphosphate = 5-phospho-alpha-D-ribose 1-diphosphate + adenine. It participates in purine metabolism; AMP biosynthesis via salvage pathway; AMP from adenine: step 1/1. In terms of biological role, catalyzes a salvage reaction resulting in the formation of AMP, that is energically less costly than de novo synthesis. The sequence is that of Adenine phosphoribosyltransferase from Streptococcus agalactiae serotype Ia (strain ATCC 27591 / A909 / CDC SS700).